The following is a 268-amino-acid chain: Tryptophan synthase alpha chain (268 aa).

Residues Glu49 and Asp60 each act as proton acceptor in the active site.

The protein belongs to the TrpA family. As to quaternary structure, tetramer of two alpha and two beta chains.

It carries out the reaction (1S,2R)-1-C-(indol-3-yl)glycerol 3-phosphate + L-serine = D-glyceraldehyde 3-phosphate + L-tryptophan + H2O. It functions in the pathway amino-acid biosynthesis; L-tryptophan biosynthesis; L-tryptophan from chorismate: step 5/5. Its function is as follows. The alpha subunit is responsible for the aldol cleavage of indoleglycerol phosphate to indole and glyceraldehyde 3-phosphate. The chain is Tryptophan synthase alpha chain from Escherichia fergusonii (strain ATCC 35469 / DSM 13698 / CCUG 18766 / IAM 14443 / JCM 21226 / LMG 7866 / NBRC 102419 / NCTC 12128 / CDC 0568-73).